Consider the following 330-residue polypeptide: Aspartate--ammonia ligase (330 aa).

This sequence belongs to the class-II aminoacyl-tRNA synthetase family. AsnA subfamily.

The protein localises to the cytoplasm. It carries out the reaction L-aspartate + NH4(+) + ATP = L-asparagine + AMP + diphosphate + H(+). Its pathway is amino-acid biosynthesis; L-asparagine biosynthesis; L-asparagine from L-aspartate (ammonia route): step 1/1. The sequence is that of Aspartate--ammonia ligase from Escherichia coli O139:H28 (strain E24377A / ETEC).